The primary structure comprises 241 residues: Probable transcriptional regulatory protein str0195 (241 aa).

This sequence belongs to the TACO1 family. YeeN subfamily.

The protein localises to the cytoplasm. The polypeptide is Probable transcriptional regulatory protein str0195 (Streptococcus thermophilus (strain CNRZ 1066)).